The sequence spans 453 residues: Ras association domain-containing protein 10 (453 aa).

A Ras-associating domain is found at 1–107 (MENEEWKVSV…VKFVLVRSEA (107 aa)). The stretch at 262-295 (QKCDEVLLLQEQISRQEEAMEQMTVQIQEELNKR) forms a coiled coil. Basic and acidic residues predominate over residues 299 to 310 (RRQEELSSKEQE). Disordered stretches follow at residues 299–322 (RRQE…DQGG) and 402–453 (GVTT…ESLV). Composition is skewed to polar residues over residues 402-411 (GVTTTGSPTD) and 433-444 (TGLSSMHSQDSD).

The protein resides in the cytoplasm. Its subcellular location is the cytosol. It is found in the cytoskeleton. The protein localises to the microtubule organizing center. It localises to the centrosome. The protein resides in the spindle pole. In terms of biological role, may play role in regulating embryonic neurogenesis. In Xenopus laevis (African clawed frog), this protein is Ras association domain-containing protein 10 (rassf10).